The sequence spans 207 residues: Ribosomal RNA small subunit methyltransferase G (207 aa).

S-adenosyl-L-methionine is bound by residues glycine 74, leucine 79, 125–126, and arginine 140; that span reads VE.

This sequence belongs to the methyltransferase superfamily. RNA methyltransferase RsmG family.

Its subcellular location is the cytoplasm. The catalysed reaction is guanosine(527) in 16S rRNA + S-adenosyl-L-methionine = N(7)-methylguanosine(527) in 16S rRNA + S-adenosyl-L-homocysteine. Specifically methylates the N7 position of guanine in position 527 of 16S rRNA. The chain is Ribosomal RNA small subunit methyltransferase G from Shewanella piezotolerans (strain WP3 / JCM 13877).